A 523-amino-acid chain; its full sequence is MVEETSSGGGSSASPIKTIVVLVQENRSFDHMLGWFKELNPEIDGVSESEPRSNPLSTSDPNSAQIFFGKESQNIDPDPGHSFQAIYEQVFGKPFSDESPYPDPKMNGFVQNAEAITKGMSEKVVMQGFPPEKLPVFKELVQEFAVCDRWFSSLPSSTQPNRLYVHAATSNGAFSNDTNTLVRGFPQRTVFESLEESGFTFGIYYQSFPNCLFYRNMRKLKYVDNFHQYHLSFKRHCKEGKLPNYVVIEPRYFKILSAPANDDHPKNDVVEGQNLVKEIYEALRASPQWNEILFVVVYDEHGGYYDHVPTPVIGVPNPDGLVGPEPYNFKFDRLGVRVPALLISPWIEPGTVLHEPNGPEPTSQFEHSSIPATLKKIFNLKSFLTKRDEWAGTLDAVINRTSPRTDCPVTLPELPRARDIDIGTQEEDEDLTDFQIELIQAAAVLKGDHIKDIYPFKLADKMKVLDAARYVEEAFTRFHGESKKAKEEGRDEHEIVDLSKGSTRHSTPKSFVQKLFSCLICDN.

The segment at 44-64 is disordered; that stretch reads DGVSESEPRSNPLSTSDPNSA. Residues 52 to 64 are compositionally biased toward polar residues; the sequence is RSNPLSTSDPNSA.

Belongs to the bacterial phospholipase C family. As to expression, expressed in root tips, cotyledons, on leaf margins, stems, young anthers and funiculus.

The enzyme catalyses a 1-acyl-sn-glycero-3-phosphate + H2O = a 1-acyl-sn-glycerol + phosphate. Functionally, possesses specific phosphatase activity toward lysophosphatidic acid (LPA) in vitro. Does not show phospholipase C activity. May play a role in signal transduction and storage lipid synthesis. May be involved in brassinolide-mediated signaling in root development. The chain is Non-specific phospholipase C3 (NPC3) from Arabidopsis thaliana (Mouse-ear cress).